Here is a 235-residue protein sequence, read N- to C-terminus: Large ribosomal subunit protein uL1 (235 aa).

This sequence belongs to the universal ribosomal protein uL1 family. As to quaternary structure, part of the 50S ribosomal subunit.

Functionally, binds directly to 23S rRNA. The L1 stalk is quite mobile in the ribosome, and is involved in E site tRNA release. In terms of biological role, protein L1 is also a translational repressor protein, it controls the translation of the L11 operon by binding to its mRNA. This is Large ribosomal subunit protein uL1 from Lawsonia intracellularis (strain PHE/MN1-00).